The primary structure comprises 383 residues: Histidine decarboxylase (383 aa).

His120 is a substrate binding site. N6-(pyridoxal phosphate)lysine is present on Lys233.

It belongs to the group II decarboxylase family. In terms of assembly, homotetramer. The cofactor is pyridoxal 5'-phosphate.

The enzyme catalyses L-histidine + H(+) = histamine + CO2. This is Histidine decarboxylase from Acinetobacter baumannii (strain AB307-0294).